Reading from the N-terminus, the 488-residue chain is Acetyl-coenzyme A carboxylase carboxyl transferase subunit beta, chloroplastic (488 aa).

Residues 189–211 (ISGSDSGSSNIRTDGNGSDIRGR) are disordered. A CoA carboxyltransferase N-terminal domain is found at 224-488 (LWVQCENCYG…LHGFFPLTQN (265 aa)). Positions 228, 231, 247, and 250 each coordinate Zn(2+). Residues 228 to 250 (CENCYGLNYKKFFKSKMNICEQC) form a C4-type zinc finger.

The protein belongs to the AccD/PCCB family. Acetyl-CoA carboxylase is a heterohexamer composed of biotin carboxyl carrier protein, biotin carboxylase and 2 subunits each of ACCase subunit alpha and ACCase plastid-coded subunit beta (accD). The cofactor is Zn(2+).

Its subcellular location is the plastid. It is found in the chloroplast stroma. It catalyses the reaction N(6)-carboxybiotinyl-L-lysyl-[protein] + acetyl-CoA = N(6)-biotinyl-L-lysyl-[protein] + malonyl-CoA. It functions in the pathway lipid metabolism; malonyl-CoA biosynthesis; malonyl-CoA from acetyl-CoA: step 1/1. In terms of biological role, component of the acetyl coenzyme A carboxylase (ACC) complex. Biotin carboxylase (BC) catalyzes the carboxylation of biotin on its carrier protein (BCCP) and then the CO(2) group is transferred by the transcarboxylase to acetyl-CoA to form malonyl-CoA. The protein is Acetyl-coenzyme A carboxylase carboxyl transferase subunit beta, chloroplastic of Liriodendron tulipifera (Tuliptree).